The following is a 256-amino-acid chain: Undecaprenyl-diphosphatase (256 aa).

Transmembrane regions (helical) follow at residues 5 to 25 (IIEIIILSIVQGISEFLPISS), 41 to 61 (NSLMIDVSLHLGSLLAIVFYF), 74 to 94 (LLSLLIIGSIPIVIAGYVISS), 100 to 120 (LLENNLKIIAWTTLIFGIILY), 135 to 155 (LNFKTILYIGLFQILALIPGV), 180 to 200 (FLLAIPAIAGASVLQLKNAIG), 208 to 228 (LVLISITLSFLFSYFTVKFFL), and 234 to 254 (FSLNVFVIYRIIISIILFIII).

It belongs to the UppP family.

The protein resides in the cell inner membrane. It catalyses the reaction di-trans,octa-cis-undecaprenyl diphosphate + H2O = di-trans,octa-cis-undecaprenyl phosphate + phosphate + H(+). Its function is as follows. Catalyzes the dephosphorylation of undecaprenyl diphosphate (UPP). Confers resistance to bacitracin. This chain is Undecaprenyl-diphosphatase, found in Pelagibacter ubique (strain HTCC1062).